Reading from the N-terminus, the 477-residue chain is MKVTLPEFERAGVMVVGDVMLDRYWYGPTSRISPEAPVPVVKVNTIEERPGGAANVAMNIASLGANARLVGLTGIDDAARALSKSLADVNVKCDFVSVPTHPTITKLRVLSRNQQLIRLDFEEGFEGVDPQPMHERINQALSSIGALVLSDYAKGALASVQQMIQLARKAGVPVLIDPKGTDFERYRGATLLTPNLSEFEAVVGKCKTEEEIVERGMKLIADYELSALLVTRSEQGMSLLQPGKAPLHMPTQAQEVYDVTGAGDTVIGVLAATLAAGNSLEEACFFANAAAGVVVGKLGTSTVSPIELENAVRGRADTGFGVMTEEELKLAVAAARKRGEKVVMTNGVFDILHAGHVFYLANARKLGDRLIVAVNSDASTKRLKGDSRPVNPLEQRMIVLGALEAVDWVVSFEEDTPQRLIAGILPDLLVKGGDYKPEEIAGSKEVWANGGEVLVLNFEDGCSTTNIIKKIQQDKKG.

A ribokinase region spans residues 1 to 318; the sequence is MKVTLPEFER…ENAVRGRADT (318 aa). Residue Lys-179 is modified to N6-acetyllysine. Residue 195 to 198 coordinates ATP; it reads NLSE. Residue Asp-264 is part of the active site. A cytidylyltransferase region spans residues 344 to 477; sequence MTNGVFDILH…IKKIQQDKKG (134 aa).

This sequence in the N-terminal section; belongs to the carbohydrate kinase PfkB family. The protein in the C-terminal section; belongs to the cytidylyltransferase family. As to quaternary structure, homodimer.

The enzyme catalyses D-glycero-beta-D-manno-heptose 7-phosphate + ATP = D-glycero-beta-D-manno-heptose 1,7-bisphosphate + ADP + H(+). It catalyses the reaction D-glycero-beta-D-manno-heptose 1-phosphate + ATP + H(+) = ADP-D-glycero-beta-D-manno-heptose + diphosphate. The protein operates within nucleotide-sugar biosynthesis; ADP-L-glycero-beta-D-manno-heptose biosynthesis; ADP-L-glycero-beta-D-manno-heptose from D-glycero-beta-D-manno-heptose 7-phosphate: step 1/4. Its pathway is nucleotide-sugar biosynthesis; ADP-L-glycero-beta-D-manno-heptose biosynthesis; ADP-L-glycero-beta-D-manno-heptose from D-glycero-beta-D-manno-heptose 7-phosphate: step 3/4. It functions in the pathway bacterial outer membrane biogenesis; LPS core biosynthesis. In terms of biological role, catalyzes the phosphorylation of D-glycero-D-manno-heptose 7-phosphate at the C-1 position to selectively form D-glycero-beta-D-manno-heptose-1,7-bisphosphate. Functionally, catalyzes the ADP transfer from ATP to D-glycero-beta-D-manno-heptose 1-phosphate, yielding ADP-D-glycero-beta-D-manno-heptose. This Shigella flexneri protein is Bifunctional protein HldE.